The sequence spans 208 residues: ATP-dependent Clp protease proteolytic subunit (208 aa).

S98 serves as the catalytic Nucleophile. H123 is an active-site residue.

This sequence belongs to the peptidase S14 family. In terms of assembly, fourteen ClpP subunits assemble into 2 heptameric rings which stack back to back to give a disk-like structure with a central cavity, resembling the structure of eukaryotic proteasomes.

The protein localises to the cytoplasm. It catalyses the reaction Hydrolysis of proteins to small peptides in the presence of ATP and magnesium. alpha-casein is the usual test substrate. In the absence of ATP, only oligopeptides shorter than five residues are hydrolyzed (such as succinyl-Leu-Tyr-|-NHMec, and Leu-Tyr-Leu-|-Tyr-Trp, in which cleavage of the -Tyr-|-Leu- and -Tyr-|-Trp bonds also occurs).. Cleaves peptides in various proteins in a process that requires ATP hydrolysis. Has a chymotrypsin-like activity. Plays a major role in the degradation of misfolded proteins. This is ATP-dependent Clp protease proteolytic subunit from Wolbachia sp. subsp. Drosophila simulans (strain wRi).